The sequence spans 183 residues: NADH-ubiquinone oxidoreductase chain 5 (183 aa).

The next 4 membrane-spanning stretches (helical) occupy residues 7-27, 30-50, 111-131, and 144-164; these read FMCY…GDNS, LFLG…FWFT, AITL…AQIG, and TPVS…FMIA.

The protein belongs to the complex I subunit 5 family.

The protein resides in the mitochondrion inner membrane. It catalyses the reaction a ubiquinone + NADH + 5 H(+)(in) = a ubiquinol + NAD(+) + 4 H(+)(out). Its function is as follows. Core subunit of the mitochondrial membrane respiratory chain NADH dehydrogenase (Complex I) that is believed to belong to the minimal assembly required for catalysis. Complex I functions in the transfer of electrons from NADH to the respiratory chain. The immediate electron acceptor for the enzyme is believed to be ubiquinone. The polypeptide is NADH-ubiquinone oxidoreductase chain 5 (NDH5) (Pisum sativum (Garden pea)).